A 256-amino-acid chain; its full sequence is Alcohol dehydrogenase (256 aa).

12–35 is a binding site for NAD(+); sequence FVAGLGGIGLDTSKELVKRDLKNL. Ser-140 contributes to the substrate binding site. Residue Tyr-153 is the Proton acceptor of the active site.

This sequence belongs to the short-chain dehydrogenases/reductases (SDR) family. Homodimer.

The enzyme catalyses a primary alcohol + NAD(+) = an aldehyde + NADH + H(+). It catalyses the reaction a secondary alcohol + NAD(+) = a ketone + NADH + H(+). This Drosophila teissieri (Fruit fly) protein is Alcohol dehydrogenase (Adh).